A 299-amino-acid polypeptide reads, in one-letter code: Prohibitin-2 (299 aa).

At A2 the chain carries N-acetylalanine. Positions 19–49 (MGTALKLLLGAGAVAYGVRESVFTVEGGHRA) are necessary for transcriptional repression. Y128 carries the post-translational modification Phosphotyrosine. K147 is subject to N6-acetyllysine. Residues 150–174 (ASQLITQRAQVSLLIRRELTERAKD) form a necessary for transcriptional repression region. S151 bears the Phosphoserine mark. The stretch at 190 to 238 (SREYTAAVEAKQVAQQEAQRAQFLVEKAKQEQRQKIVQAEGEAEAAKML) forms a coiled coil. 4 positions are modified to N6-acetyllysine: K200, K236, K250, and K262.

This sequence belongs to the prohibitin family. In terms of assembly, the mitochondrial prohibitin complex consists of two subunits (PHB1 and PHB2), assembled into a membrane-associated ring-shaped supercomplex of approximately 1 mDa. Interacts with ESR1, HDAC1 and HDAC5. Interacts with ZNF703. Interacts with STOML2. Interacts with ARFGEF3. Interacts with SPHK2. Interacts with COX4I1; the interaction associates PHB2 with COX. Interacts with MAP1LC3B (membrane-bound form LC3-II); the interaction is direct and upon mitochondrial depolarization and proteasome-dependent outer membrane rupture. Interacts with IGFBP6 (via C-terminal domain). Interacts with CLPB. Interacts with CD86 (via cytoplasmic domain); the interactions increases after priming with CD40. Interacts with AFG3L2. Interacts with DNAJC19. Interacts with AKT2; this interaction may be important for myogenic differentiation. Post-translationally, phosphorylated. Tyrosine phosphorylation is indirectly stimulated by IGFBP6.

It is found in the mitochondrion inner membrane. The protein localises to the cytoplasm. The protein resides in the nucleus. It localises to the cell membrane. Its function is as follows. Protein with pleiotropic attributes mediated in a cell-compartment- and tissue-specific manner, which include the plasma membrane-associated cell signaling functions, mitochondrial chaperone, and transcriptional co-regulator of transcription factors and sex steroid hormones in the nucleus. In terms of biological role, in the mitochondria, together with PHB, forms large ring complexes (prohibitin complexes) in the inner mitochondrial membrane (IMM) and functions as a chaperone protein that stabilizes mitochondrial respiratory enzymes and maintains mitochondrial integrity in the IMM, which is required for mitochondrial morphogenesis, neuronal survival, and normal lifespan. The prohibitin complex, with DNAJC19, regulates cardiolipin remodeling and the protein turnover of OMA1 in a cardiolipin-binding manner. Also regulates cytochrome-c oxidase assembly (COX) and mitochondrial respiration. Binding to sphingoid 1-phosphate (SPP) modulates its regulator activity. Has a key role of mitophagy receptor involved in targeting mitochondria for autophagic degradation. Involved in mitochondrial-mediated antiviral innate immunity, activates RIG-I-mediated signal transduction and production of IFNB1 and pro-inflammatory cytokine IL6. In the nucleus, serves as transcriptional co-regulator. Acts as a mediator of transcriptional repression by nuclear hormone receptors via recruitment of histone deacetylases. Functions as an estrogen receptor (ER)-selective coregulator that potentiates the inhibitory activities of antiestrogens and represses the activity of estrogens. Competes with NCOA1 for modulation of ER transcriptional activity. Functionally, in the plasma membrane, is involved in IGFBP6-induced cell migration. Cooperates with CD86 to mediate CD86-signaling in B lymphocytes that regulates the level of IgG1 produced through the activation of distal signaling intermediates. Upon CD40 engagement, required to activate NF-kappa-B signaling pathway via phospholipase C and protein kinase C activation. The chain is Prohibitin-2 from Rattus norvegicus (Rat).